A 201-amino-acid chain; its full sequence is MAQHDENVVWHAHPVTQQQREQHHGHRGVVLWFTGLSGSGKSTVAGALEEALHERGVSTYLLDGDNVRHGLCSDLGFSDEDRKENIRRVGEVARLMVDAGLVVLTAFISPHRAERQMVRERLGEGRFIEVFVDTPLAICEARDPKGLYKKARAGELRNFTGIDSVYEAPEKAEIHLDGEQLVTNLVHQLLDLLQQSDIIRS.

35 to 42 contacts ATP; it reads GLSGSGKS. Ser109 serves as the catalytic Phosphoserine intermediate.

The protein belongs to the APS kinase family.

The enzyme catalyses adenosine 5'-phosphosulfate + ATP = 3'-phosphoadenylyl sulfate + ADP + H(+). Its pathway is sulfur metabolism; hydrogen sulfide biosynthesis; sulfite from sulfate: step 2/3. Functionally, catalyzes the synthesis of activated sulfate. In Klebsiella pneumoniae (strain 342), this protein is Adenylyl-sulfate kinase.